Reading from the N-terminus, the 360-residue chain is DNA replication and repair protein RecF (360 aa).

33–40 is a binding site for ATP; the sequence is GENGSGKT.

Belongs to the RecF family.

It is found in the cytoplasm. In terms of biological role, the RecF protein is involved in DNA metabolism; it is required for DNA replication and normal SOS inducibility. RecF binds preferentially to single-stranded, linear DNA. It also seems to bind ATP. The chain is DNA replication and repair protein RecF from Rickettsia conorii (strain ATCC VR-613 / Malish 7).